The sequence spans 294 residues: 4-diphosphocytidyl-2-C-methyl-D-erythritol kinase (294 aa).

The active site involves K11. 93–103 (PFGAGLGGGSS) contacts ATP. The active site involves D135.

The protein belongs to the GHMP kinase family. IspE subfamily.

The catalysed reaction is 4-CDP-2-C-methyl-D-erythritol + ATP = 4-CDP-2-C-methyl-D-erythritol 2-phosphate + ADP + H(+). It functions in the pathway isoprenoid biosynthesis; isopentenyl diphosphate biosynthesis via DXP pathway; isopentenyl diphosphate from 1-deoxy-D-xylulose 5-phosphate: step 3/6. Catalyzes the phosphorylation of the position 2 hydroxy group of 4-diphosphocytidyl-2C-methyl-D-erythritol. The chain is 4-diphosphocytidyl-2-C-methyl-D-erythritol kinase from Chlorobium phaeobacteroides (strain DSM 266 / SMG 266 / 2430).